The primary structure comprises 393 residues: Branched-chain amino acid aminotransferase 1, mitochondrial (393 aa).

The N-terminal 34 residues, 1-34 (MIHRGLWLHNLVQSYRVGSSSSSSTLFKLVYRYN), are a transit peptide targeting the mitochondrion. Residue Arg138 participates in pyridoxal 5'-phosphate binding. Catalysis depends on Lys240, which acts as the Proton acceptor. The residue at position 240 (Lys240) is an N6-(pyridoxal phosphate)lysine. Glu276 is a binding site for pyridoxal 5'-phosphate.

Belongs to the class-IV pyridoxal-phosphate-dependent aminotransferase family. Requires pyridoxal 5'-phosphate as cofactor. As to expression, expressed specifically in lupulin glands.

The protein localises to the mitochondrion. The enzyme catalyses L-isoleucine + 2-oxoglutarate = (S)-3-methyl-2-oxopentanoate + L-glutamate. It carries out the reaction L-leucine + 2-oxoglutarate = 4-methyl-2-oxopentanoate + L-glutamate. It catalyses the reaction L-valine + 2-oxoglutarate = 3-methyl-2-oxobutanoate + L-glutamate. It functions in the pathway amino-acid biosynthesis; L-isoleucine biosynthesis; L-isoleucine from 2-oxobutanoate: step 4/4. It participates in amino-acid biosynthesis; L-leucine biosynthesis; L-leucine from 3-methyl-2-oxobutanoate: step 4/4. The protein operates within amino-acid biosynthesis; L-valine biosynthesis; L-valine from pyruvate: step 4/4. Converts 2-oxo acids to branched-chain amino acids (BCAA). Shows no kinetic preferences corresponding to anabolic or catabolic functions, but likely involved in BCAA catabolism. This Humulus lupulus (European hop) protein is Branched-chain amino acid aminotransferase 1, mitochondrial.